Here is an 809-residue protein sequence, read N- to C-terminus: Acyl-homoserine lactone acylase QuiP (809 aa).

The signal sequence occupies residues M1 to A26. Residue S261 is the Nucleophile of the active site.

Belongs to the peptidase S45 family. Heterodimer of an alpha subunit and a beta subunit processed from the same precursor.

It localises to the periplasm. The enzyme catalyses an N-acyl-L-homoserine lactone + H2O = L-homoserine lactone + a carboxylate. Catalyzes the deacylation of acyl-homoserine lactone (AHL or acyl-HSL), releasing homoserine lactone (HSL) and the corresponding fatty acid. Possesses a specificity for the degradation of long-chain acyl-HSLs (side chains of seven or more carbons in length). This chain is Acyl-homoserine lactone acylase QuiP (quiP), found in Pseudomonas fluorescens (strain ATCC BAA-477 / NRRL B-23932 / Pf-5).